The following is a 152-amino-acid chain: Xanthine-guanine phosphoribosyltransferase (152 aa).

5-phospho-alpha-D-ribose 1-diphosphate-binding positions include 37–38, Arg-69, and 88–96; these read RG and DDLVDTGGT. Arg-69 lines the GMP pocket. Residue Asp-89 participates in Mg(2+) binding. The guanine site is built by Asp-92 and Ile-135. Residues Asp-92 and Ile-135 each coordinate xanthine. Residues 92–96 and 134–135 each bind GMP; these read DTGGT and WI.

It belongs to the purine/pyrimidine phosphoribosyltransferase family. XGPT subfamily. As to quaternary structure, homotetramer. The cofactor is Mg(2+).

Its subcellular location is the cell inner membrane. It catalyses the reaction GMP + diphosphate = guanine + 5-phospho-alpha-D-ribose 1-diphosphate. It carries out the reaction XMP + diphosphate = xanthine + 5-phospho-alpha-D-ribose 1-diphosphate. The enzyme catalyses IMP + diphosphate = hypoxanthine + 5-phospho-alpha-D-ribose 1-diphosphate. It functions in the pathway purine metabolism; GMP biosynthesis via salvage pathway; GMP from guanine: step 1/1. It participates in purine metabolism; XMP biosynthesis via salvage pathway; XMP from xanthine: step 1/1. Purine salvage pathway enzyme that catalyzes the transfer of the ribosyl-5-phosphate group from 5-phospho-alpha-D-ribose 1-diphosphate (PRPP) to the N9 position of the 6-oxopurines guanine and xanthine to form the corresponding ribonucleotides GMP (guanosine 5'-monophosphate) and XMP (xanthosine 5'-monophosphate), with the release of PPi. To a lesser extent, also acts on hypoxanthine. In Salmonella choleraesuis (strain SC-B67), this protein is Xanthine-guanine phosphoribosyltransferase.